The sequence spans 78 residues: Small ribosomal subunit protein bS18 (78 aa).

Belongs to the bacterial ribosomal protein bS18 family. In terms of assembly, part of the 30S ribosomal subunit. Forms a tight heterodimer with protein bS6.

Functionally, binds as a heterodimer with protein bS6 to the central domain of the 16S rRNA, where it helps stabilize the platform of the 30S subunit. This Lacticaseibacillus casei (strain BL23) (Lactobacillus casei) protein is Small ribosomal subunit protein bS18.